The chain runs to 864 residues: Sine oculis-binding protein homolog (864 aa).

Positions 1 to 14 (MAEMEKEGRPPENK) are enriched in basic and acidic residues. A disordered region spans residues 1-25 (MAEMEKEGRPPENKRSRKPAHPVKR). 2 consecutive FCS-type zinc fingers follow at residues 142–180 (DEVS…KCFA) and 216–256 (FKNN…KCLN). 3 disordered regions span residues 304–360 (LTDA…ETPS), 413–484 (RGPP…PGAP), and 550–616 (KPPN…RGRG). 2 stretches are compositionally biased toward low complexity: residues 314-335 (PVAA…VSPS) and 417-433 (HHAS…MLPG). A compositionally biased stretch (pro residues) spans 460 to 484 (IHPPSTPTMPGNPPGLLPPPPPGAP). Low complexity-rich tracts occupy residues 565-582 (SAPG…GRSL) and 590-603 (GSSK…GSSG). An SUMO interaction motif 1 (SIM); mediates the binding to polysumoylated substrates motif is present at residues 618 to 622 (VVDLT). Phosphoserine is present on Ser-627. Residues 648-652 (VIDLT) carry the SUMO interaction motif 2 (SIM); mediates the binding to polysumoylated substrates motif. Residue Lys-672 forms a Glycyl lysine isopeptide (Lys-Gly) (interchain with G-Cter in SUMO2) linkage. At Ser-694 the chain carries Phosphoserine. The tract at residues 725–750 (APAEAKGAEPPPEQPPPPAPPKKLLS) is disordered. The span at 733 to 745 (EPPPEQPPPPAPP) shows a compositional bias: pro residues.

Belongs to the SOBP family. As to quaternary structure, interacts (via SIM domains) with SUMO1 and SUMO2.

In terms of biological role, implicated in development of the cochlea. The protein is Sine oculis-binding protein homolog of Rattus norvegicus (Rat).